Reading from the N-terminus, the 338-residue chain is UDP-N-acetylenolpyruvoylglucosamine reductase (338 aa).

Residues 17 to 188 form the FAD-binding PCMH-type domain; sequence IAARTDWWID…MYVDYRLRLK (172 aa). The active site involves arginine 164. Residue serine 237 is the Proton donor of the active site. The active site involves glutamate 333.

It belongs to the MurB family. FAD is required as a cofactor.

Its subcellular location is the cytoplasm. The catalysed reaction is UDP-N-acetyl-alpha-D-muramate + NADP(+) = UDP-N-acetyl-3-O-(1-carboxyvinyl)-alpha-D-glucosamine + NADPH + H(+). The protein operates within cell wall biogenesis; peptidoglycan biosynthesis. Cell wall formation. In Porphyromonas gingivalis (strain ATCC BAA-308 / W83), this protein is UDP-N-acetylenolpyruvoylglucosamine reductase.